A 195-amino-acid chain; its full sequence is Dephospho-CoA kinase (195 aa).

Residues 2–195 form the DPCK domain; the sequence is IIGLTGGIGV…DIVDSLSLSS (194 aa). 10–15 lines the ATP pocket; the sequence is GVGKSF.

The protein belongs to the CoaE family.

Its subcellular location is the cytoplasm. The catalysed reaction is 3'-dephospho-CoA + ATP = ADP + CoA + H(+). The protein operates within cofactor biosynthesis; coenzyme A biosynthesis; CoA from (R)-pantothenate: step 5/5. Its function is as follows. Catalyzes the phosphorylation of the 3'-hydroxyl group of dephosphocoenzyme A to form coenzyme A. In Wolbachia sp. subsp. Brugia malayi (strain TRS), this protein is Dephospho-CoA kinase.